The following is an 853-amino-acid chain: Protein translocase subunit SecA 1 (853 aa).

Residues Q85, 103-107, and D492 contribute to the ATP site; that span reads GEGKT.

This sequence belongs to the SecA family. As to quaternary structure, monomer and homodimer. Part of the essential Sec protein translocation apparatus which comprises SecA, SecYEG and auxiliary proteins SecDF. Other proteins may also be involved.

It is found in the cell membrane. The protein resides in the cytoplasm. It catalyses the reaction ATP + H2O + cellular proteinSide 1 = ADP + phosphate + cellular proteinSide 2.. In terms of biological role, part of the Sec protein translocase complex. Interacts with the SecYEG preprotein conducting channel. Has a central role in coupling the hydrolysis of ATP to the transfer of proteins into and across the cell membrane, serving as an ATP-driven molecular motor driving the stepwise translocation of polypeptide chains across the membrane. In Corynebacterium diphtheriae (strain ATCC 700971 / NCTC 13129 / Biotype gravis), this protein is Protein translocase subunit SecA 1.